Consider the following 525-residue polypeptide: Probable metalloreductase AIM14 (525 aa).

7 consecutive transmembrane segments (helical) span residues 13–33, 52–72, 82–102, 118–138, 152–172, 179–199, and 203–223; these read NIKYGTFVLVISLLVVCYIAV, PLWLSVLLWTALVIGMGVIHV, FGRLCYALLPLIVFLAIRPSP, LGRLATLVGVVHGVLYTVHFV, FLGVIILAVFLVMVVTSLPFF, LFYTIHYLSAWFVAIATIFHA, and VGWLFFWVALFMGSSLLYRVL. Residues 82–194 form the Ferric oxidoreductase domain; the sequence is FGRLCYALLP…YLSAWFVAIA (113 aa). An FAD-binding FR-type domain is found at 215 to 344; that stretch reads GSSLLYRVLA…GGAGISFALP (130 aa). The disordered stretch occupies residues 407–478; it reads LLSEDMEMEE…YHDGRPQPAD (72 aa). The span at 410–438 shows a compositional bias: acidic residues; sequence EDMEMEEIGQEDEDRERDELDDLLSEDEG. Over residues 453 to 463 the composition is skewed to basic and acidic residues; it reads GKDQDNGKREA.

It belongs to the ferric reductase (FRE) family. AIM14 subfamily.

The protein localises to the membrane. Probable cell surface metalloreductase. May be involved in iron or copper homeostasis. This Yarrowia lipolytica (strain CLIB 122 / E 150) (Yeast) protein is Probable metalloreductase AIM14 (AIM14).